The sequence spans 419 residues: F-box/LRR-repeat protein At1g67190 (419 aa).

One can recognise an F-box domain in the interval 1–48; it reads MDYLPVEVIGNILSRLGGARDVVIASATCRKWREACRKHLQTLSFNSA. 9 LRR repeats span residues 53 to 82, 96 to 124, 133 to 157, 158 to 183, 185 to 209, 245 to 272, 273 to 297, 301 to 326, and 356 to 381; these read YRDLTTNRLEILITQTIFQTMGLQGLSIMM, WLMYTRDTLRRLSYNVRTTPNVNILEICG, LAHNSITGVEPSFQRFPCLKSLSLS, YVSISALDLNLLLSACPMIESLELVS, EIAMSDAQVTIELSSPTLKSVYFDG, HFKLDDVSVIHLDIMETSESLEVVDVNH, FTMVWPKFYQMISRSQKLKKLRLWD, DDDDEIIDVESIAAGFSHLTHLSLSY, and INDVFSIWVEELLRRCPNLKKLIIYG.

The chain is F-box/LRR-repeat protein At1g67190 from Arabidopsis thaliana (Mouse-ear cress).